The following is a 99-amino-acid chain: Nucleoid-associated protein Cj1642 (99 aa).

The protein belongs to the YbaB/EbfC family. As to quaternary structure, homodimer.

Its subcellular location is the cytoplasm. The protein resides in the nucleoid. In terms of biological role, binds to DNA and alters its conformation. May be involved in regulation of gene expression, nucleoid organization and DNA protection. This is Nucleoid-associated protein Cj1642 from Campylobacter jejuni subsp. jejuni serotype O:2 (strain ATCC 700819 / NCTC 11168).